A 276-amino-acid polypeptide reads, in one-letter code: MSRIAATFARLRDEGRAGLIPFVEAFDPDRETSATLLAGMAARGADLIEIGMPFTDPMADGPTIQQAGRRALRAGATLAGTLGLVRDFRAVNDTVPLILMGYLNPILSYGVERFTADAAAAGVDGVIVVDLPTEEADLLLPHLRQHRIDLIRLVAPTTTDERLPVVLNDSSGFVYYVSITGITGTRTASAEDLARDIPRVRKATDMPIAVGFGVRTPAQAATVARFADAAVVASALIDKLAAGLDADGKAPPAIVEAVLDDVAALAAAVRGERRAA.

Residues E49 and D60 each act as proton acceptor in the active site.

Belongs to the TrpA family. Tetramer of two alpha and two beta chains.

The enzyme catalyses (1S,2R)-1-C-(indol-3-yl)glycerol 3-phosphate + L-serine = D-glyceraldehyde 3-phosphate + L-tryptophan + H2O. Its pathway is amino-acid biosynthesis; L-tryptophan biosynthesis; L-tryptophan from chorismate: step 5/5. Its function is as follows. The alpha subunit is responsible for the aldol cleavage of indoleglycerol phosphate to indole and glyceraldehyde 3-phosphate. This chain is Tryptophan synthase alpha chain, found in Acidiphilium cryptum (strain JF-5).